We begin with the raw amino-acid sequence, 293 residues long: Formamidopyrimidine-DNA glycosylase (293 aa).

Pro-2 serves as the catalytic Schiff-base intermediate with DNA. The active-site Proton donor is Glu-3. The active-site Proton donor; for beta-elimination activity is Lys-58. DNA contacts are provided by His-104, Arg-127, and Arg-170. The segment at 257–293 (SVYGREGKPCRNPACGGTVERVVQSGRSTFFCASCQT) adopts an FPG-type zinc-finger fold. The active-site Proton donor; for delta-elimination activity is the Arg-283.

Belongs to the FPG family. Monomer. It depends on Zn(2+) as a cofactor.

The enzyme catalyses Hydrolysis of DNA containing ring-opened 7-methylguanine residues, releasing 2,6-diamino-4-hydroxy-5-(N-methyl)formamidopyrimidine.. The catalysed reaction is 2'-deoxyribonucleotide-(2'-deoxyribose 5'-phosphate)-2'-deoxyribonucleotide-DNA = a 3'-end 2'-deoxyribonucleotide-(2,3-dehydro-2,3-deoxyribose 5'-phosphate)-DNA + a 5'-end 5'-phospho-2'-deoxyribonucleoside-DNA + H(+). Its function is as follows. Involved in base excision repair of DNA damaged by oxidation or by mutagenic agents. Acts as a DNA glycosylase that recognizes and removes damaged bases. Has a preference for oxidized purines, such as 7,8-dihydro-8-oxoguanine (8-oxoG). Has AP (apurinic/apyrimidinic) lyase activity and introduces nicks in the DNA strand. Cleaves the DNA backbone by beta-delta elimination to generate a single-strand break at the site of the removed base with both 3'- and 5'-phosphates. The polypeptide is Formamidopyrimidine-DNA glycosylase (Brucella melitensis biotype 1 (strain ATCC 23456 / CCUG 17765 / NCTC 10094 / 16M)).